A 378-amino-acid chain; its full sequence is Putative F-box protein At4g17565 (378 aa).

Residues 16–63 enclose the F-box domain; the sequence is PKWSELCPDLLRSIFEQLSFTNLNRAKLVCRSWNSASRGCVPKRNQIP.

The sequence is that of Putative F-box protein At4g17565 from Arabidopsis thaliana (Mouse-ear cress).